A 294-amino-acid polypeptide reads, in one-letter code: 4-hydroxy-tetrahydrodipicolinate synthase (294 aa).

T45 is a binding site for pyruvate. Y133 functions as the Proton donor/acceptor in the catalytic mechanism. The Schiff-base intermediate with substrate role is filled by K161. I203 provides a ligand contact to pyruvate.

This sequence belongs to the DapA family. In terms of assembly, homotetramer; dimer of dimers.

The protein resides in the cytoplasm. It catalyses the reaction L-aspartate 4-semialdehyde + pyruvate = (2S,4S)-4-hydroxy-2,3,4,5-tetrahydrodipicolinate + H2O + H(+). Its pathway is amino-acid biosynthesis; L-lysine biosynthesis via DAP pathway; (S)-tetrahydrodipicolinate from L-aspartate: step 3/4. Its function is as follows. Catalyzes the condensation of (S)-aspartate-beta-semialdehyde [(S)-ASA] and pyruvate to 4-hydroxy-tetrahydrodipicolinate (HTPA). This is 4-hydroxy-tetrahydrodipicolinate synthase from Buchnera aphidicola subsp. Acyrthosiphon pisum (strain APS) (Acyrthosiphon pisum symbiotic bacterium).